Consider the following 551-residue polypeptide: Probable inorganic carbon transporter subunit DabB2 (551 aa).

The next 14 helical transmembrane spans lie at 6–26 (SHTTGLLLLAMPALLLMAAVI), 42–62 (VQWTSFAAFGLALLAVVSFLF), 65–85 (QQNLMLGAGSLPAGLGLLALS), 86–106 (IQVNGLTLVLASLVSFVLSVI), 132–152 (GFFLLVVISGNLGLFTLAIIA), 187–207 (LLLAATVLIGHQIGSLEFSQI), 217–237 (LSIALHVAAWLIVLAAILKSA), 252–272 (PTPVSALMHAGVVYSGAIIVL), 284–304 (ALLLLALIGLMTLAIGSLVML), 321–341 (LGFMMLELGLGLFGLALLHLV), 374–394 (VVAWFTTVIVSGLFTLGIAAA), 404–424 (MLPAVLTIIALATAQLMLKAL), 434–454 (VAAGAAIAMTGVYVFLHEVFI), and 469–489 (PLLDLLLMAITIITFLFVAWL).

The protein belongs to the inorganic carbon transporter (TC 9.A.2) DabB family. Forms a complex with DabA2, possibly a heterodimer.

It localises to the cell inner membrane. Uptake of inorganic carbon by cells in the presence of thiosulphate is fully inhibited by the uncouplers carbonyl cyanide m-chlorophenyl hydrazone (CCCP), carbonyl cyanide p-trifluoromethoxyphenyl hydrazone (FCCP), S13 or SF6847. Not inhibited by the ATPase inhibitor N,N-dicyclohexylcarbodiimide (DCCD). Inorganic carbon uptake is inhibited by the ionophore carbonyl cyanide m-chlorophenyl hydrazone (CCCP), suggesting uptake is coupled to a cation gradient. Part of an energy-coupled inorganic carbon pump; its substrate may be carbon dioxide. Expression of both dabA2 and dabB2 (DAB2) restores growth in ambient air to E.coli deleted of its carbonic anhydrase genes (called CAfree, deletion of 'can' and 'cynT'); neither dabA2 or dabB2 alone is sufficient. Rescue is pH-independent, suggesting it transports CO(2) and not carbonate ions. Together the genes allow greater than normal uptake of inorganic carbon by E.coli. Uptake of carbon dioxide rather than bicarbonate has been suggested based on kinetic calculations. In Halothiobacillus neapolitanus (strain ATCC 23641 / c2) (Thiobacillus neapolitanus), this protein is Probable inorganic carbon transporter subunit DabB2.